Consider the following 64-residue polypeptide: Drosocin antimicrobial peptides (64 aa).

Residues 1–19 (MKFTIVFLLLACVFAMAVA) form the signal peptide. The propeptide occupies 20–21 (TP). Ser-28 carries an O-linked (GalNAc...) serine glycan. Thr-32 carries O-linked (GalNAc...) threonine glycosylation. Positions 32–40 (TSHPRPIRV) are critical for inhibition of translation, possibly due to its role in mediating interactions with bacterial 23S rRNA and peptide chain release factors.

The protein belongs to the drosocin family. Associates with the bacterial 50S ribosomal complex, occupying the nascent peptide exit tunnel. Interacts with bacterial 23S rRNA; this interaction is direct. Interacts with bacterial rplV/50S ribosomal protein L22; this interaction is direct. Interacts with bacterial prfA/peptide chain release factor RF1; while associated with the bacterial 50S ribosomal complex, this interaction is direct and traps RF1 on the ribosome, inhibiting further translation. Post-translationally, proteolytically cleaved at a pair of basic residues corresponding to the RXK/RR optimal cleavage site for furin proteases to produce two distinct antibacterial peptides. O-glycosylated. O-glycosylation may be required for efficient uptake by target bacterial cells. Monosaccharide modification of Thr-32 provides better antibacterial activity than disaccharide modification or no modification. O-glycosylation of Thr-32 is not essential for antimicrobial activity but enhances this activity by mediating interactions with the 23S rRNA and increasing the efficiency of translation inhibition.

The protein resides in the secreted. In terms of biological role, antibacterial peptide with strong anti-Gram-negative bacteria activity. Significantly contributes to antibacterial activity against Enterobacter cloacae but not Providencia burhodogranariea. Inhibitor of bacterial translation machinery that targets translation termination in a prfA- or prfB-dependent manner. Binds within the nascent peptide exit tunnel of the bacterial large ribosomal subunit, potentially interfering with nascent chain translocation that occurs post-peptide bond formation. Binds prfA/RF1 (and potentially prfB/RF2), trapping it on the ribosome after release of the nascent polypeptide chain and preventing further translation. The resulting depletion of peptide chain release factors further disrupts bacterial translation by preventing ribosomal peptide chain release and inducing stop codon readthrough. Entry into target Escherichia coli cells requires the bacterial peptide antibiotic transporter sbmA. Its function is as follows. Peptide with significant antibacterial activity against Providencia burhodogranariea but not Enterobacter cloacae. In Drosophila simulans (Fruit fly), this protein is Drosocin antimicrobial peptides (Dro).